The primary structure comprises 284 residues: MSAHTRITRKTVTAIRSTKGIGSLVSLTAYSAPMAKLVHDVADVIIVGDSVGMVLYGMPDTLRVTLDMMIAHGAAVVRGAAQACVVVDLPFSTFQESPAQAYRSAARLLAETGAQAVKLEGGCEMTDTIRFLTERGIPVMAHVGLMPQQANAAGGFRAQGMDPLSAAQVFDAACAAERAGAFSVVIEGTAEALARHLTGTLTIPTIGIGASPACDGQVLVTEDMIGAFDAYTPRFVKRYADANAVMRDAIRQYAHDVRHRVFPEPAHCFGYGKPLQLADAGATV.

Residues Asp49 and Asp88 each contribute to the Mg(2+) site. 3-methyl-2-oxobutanoate is bound by residues 49 to 50 (DS), Asp88, and Lys118. Glu120 is a Mg(2+) binding site. Residue Glu187 is the Proton acceptor of the active site.

Belongs to the PanB family. As to quaternary structure, homodecamer; pentamer of dimers. Requires Mg(2+) as cofactor.

It localises to the cytoplasm. It catalyses the reaction 3-methyl-2-oxobutanoate + (6R)-5,10-methylene-5,6,7,8-tetrahydrofolate + H2O = 2-dehydropantoate + (6S)-5,6,7,8-tetrahydrofolate. Its pathway is cofactor biosynthesis; (R)-pantothenate biosynthesis; (R)-pantoate from 3-methyl-2-oxobutanoate: step 1/2. In terms of biological role, catalyzes the reversible reaction in which hydroxymethyl group from 5,10-methylenetetrahydrofolate is transferred onto alpha-ketoisovalerate to form ketopantoate. The polypeptide is 3-methyl-2-oxobutanoate hydroxymethyltransferase 2 (Burkholderia ambifaria (strain ATCC BAA-244 / DSM 16087 / CCUG 44356 / LMG 19182 / AMMD) (Burkholderia cepacia (strain AMMD))).